The primary structure comprises 185 residues: Pycsar effector protein EcPycTM (185 aa).

The next 3 helical transmembrane spans lie at 32 to 52 (ALLLAVNGATATILSNKVGYF), 63 to 83 (MVIFFLLLFMISIFIFMSVLL), and 141 to 161 (FILSCIAKQKFLFFSSAVSWI).

It localises to the cell inner membrane. In terms of biological role, pycsar (pyrimidine cyclase system for antiphage resistance) provides immunity against bacteriophage. The pyrimidine cyclase (PycC) synthesizes cyclic nucleotides in response to infection; these serve as specific second messenger signals. The signals activate the adjacent effector, leading to bacterial cell death and abortive phage infection. A clade E Pycsar system. Functionally, the effector component of a two-gene Pycsar system. Expression of this and adjacent cytidylate cyclase EcPycC (AC P0DV24) confers resistance to bacteriophage P1 and T5; this protein is required for resistance. When cells expressing the Pycsar system are infected by phage T5 at low multiplicity of infection (0.2 MOI) the culture survives, at 2.0 MOI bacteria enter growth arrest. The same cells enter growth arrest after exposure to 250 uM cCMP but not cUMP; this effector protein responds only to cCMP, usually produced by its cognate NTP cyclase. Some of the cells treated with cCMP have abnormal membrane protrusions, probably due to effects on membrane integrity. The chain is Pycsar effector protein EcPycTM from Escherichia coli.